A 314-amino-acid polypeptide reads, in one-letter code: Ribosomal RNA small subunit methyltransferase A (314 aa).

N29, V31, G56, E77, D107, and N126 together coordinate S-adenosyl-L-methionine. A disordered region spans residues 291-314 (PKADDAGDDADAQAKADGAQVSTL). Low complexity predominate over residues 303-314 (QAKADGAQVSTL).

Belongs to the class I-like SAM-binding methyltransferase superfamily. rRNA adenine N(6)-methyltransferase family. RsmA subfamily.

It is found in the cytoplasm. It catalyses the reaction adenosine(1518)/adenosine(1519) in 16S rRNA + 4 S-adenosyl-L-methionine = N(6)-dimethyladenosine(1518)/N(6)-dimethyladenosine(1519) in 16S rRNA + 4 S-adenosyl-L-homocysteine + 4 H(+). Functionally, specifically dimethylates two adjacent adenosines (A1518 and A1519) in the loop of a conserved hairpin near the 3'-end of 16S rRNA in the 30S particle. May play a critical role in biogenesis of 30S subunits. The sequence is that of Ribosomal RNA small subunit methyltransferase A from Mycolicibacterium gilvum (strain PYR-GCK) (Mycobacterium gilvum (strain PYR-GCK)).